The chain runs to 441 residues: Serine/threonine-protein kinase prk-2 (441 aa).

One can recognise a Protein kinase domain in the interval 31 to 285; sequence YKLKAELGRG…LEAILNHPWV (255 aa). Residues 37–45 and Lys-60 each bind ATP; that span reads LGRGGFGVV. Residue Asp-158 is the Proton acceptor of the active site. The interval 301–364 is disordered; it reads QKKTSESSDD…NQKKPNHKEF (64 aa). Residues 303–320 show a composition bias toward basic and acidic residues; that stretch reads KTSESSDDHHSETLGDHS. Over residues 328-338 the composition is skewed to polar residues; that stretch reads PPTSSVSQQPG.

It belongs to the protein kinase superfamily. Ser/Thr protein kinase family. PIM subfamily. It depends on Mg(2+) as a cofactor.

The enzyme catalyses L-seryl-[protein] + ATP = O-phospho-L-seryl-[protein] + ADP + H(+). It catalyses the reaction L-threonyl-[protein] + ATP = O-phospho-L-threonyl-[protein] + ADP + H(+). Involved in the negative regulation of synaptic differentiation in PLM neurons. The chain is Serine/threonine-protein kinase prk-2 from Caenorhabditis elegans.